A 754-amino-acid polypeptide reads, in one-letter code: 5-methyltetrahydropteroyltriglutamate--homocysteine methyltransferase (754 aa).

Residues 17–20 and lysine 117 each bind 5-methyltetrahydropteroyltri-L-glutamate; that span reads RELK. Residues 431 to 433 and glutamate 484 contribute to the L-homocysteine site; that span reads IGS. L-methionine-binding positions include 431–433 and glutamate 484; that span reads IGS. Residues 515-516 and tryptophan 561 each bind 5-methyltetrahydropteroyltri-L-glutamate; that span reads RC. An L-homocysteine-binding site is contributed by aspartate 599. Aspartate 599 contributes to the L-methionine binding site. Glutamate 605 contacts 5-methyltetrahydropteroyltri-L-glutamate. Residues histidine 641, cysteine 643, and glutamate 665 each contribute to the Zn(2+) site. The active-site Proton donor is the histidine 694. Residue cysteine 726 coordinates Zn(2+).

Belongs to the vitamin-B12 independent methionine synthase family. Requires Zn(2+) as cofactor.

The catalysed reaction is 5-methyltetrahydropteroyltri-L-glutamate + L-homocysteine = tetrahydropteroyltri-L-glutamate + L-methionine. It functions in the pathway amino-acid biosynthesis; L-methionine biosynthesis via de novo pathway; L-methionine from L-homocysteine (MetE route): step 1/1. Functionally, catalyzes the transfer of a methyl group from 5-methyltetrahydrofolate to homocysteine resulting in methionine formation. The chain is 5-methyltetrahydropteroyltriglutamate--homocysteine methyltransferase from Klebsiella pneumoniae subsp. pneumoniae (strain ATCC 700721 / MGH 78578).